The following is a 190-amino-acid chain: Major sperm protein 32 (190 aa).

Positions 72 to 189 constitute an MSP domain; the sequence is MIQTQPGTKI…RRKNLPIEYN (118 aa).

Sperm.

It is found in the cell projection. The protein localises to the pseudopodium. Its subcellular location is the cytoplasm. The protein resides in the cytoskeleton. Central component in molecular interactions underlying sperm crawling. Forms an extensive filament system that extends from sperm villipoda, along the leading edge of the pseudopod. In Caenorhabditis elegans, this protein is Major sperm protein 32 (msp-32).